We begin with the raw amino-acid sequence, 746 residues long: NAD(P)H-quinone oxidoreductase subunit 5, chloroplastic (746 aa).

Helical transmembrane passes span 9–29 (WIIPFAPLPFTMSIGLGLLLV), 40–60 (WTFPSVSLLSIAMVFSVNLSI), 89–109 (IDPLTSIMSILITTVGIMVLI), 122–139 (LRFFAYMSFSNTSMLGLV), 147–167 (IYIFWELVGMCSYLLIGFWFT), 185–205 (GDFGLLLGILGFYWITGSFEF), 219–239 (NGVNSLFATLCAFLLFVGAVA), 258–278 (TPISALIHAATMVAAGIFLVA), 280–300 (LLPLFTVIPYIMNLISLIGVI), 327–347 (LGYIMLAPGIGSYRAALFHLI), 396–416 (TTFLLGTLSLCGIPPLACFWS), 425–445 (WLYSPIFAIIACSTAGLTAFY), 546–566 (LLPLLGLVLFTLFVGSVGIPF), 605–625 (IYSVSIACFGIFIASLFYGSI), and 722–742 (YLFVYLSYVSILLLIYYFYFF).

Belongs to the complex I subunit 5 family. As to quaternary structure, NDH is composed of at least 16 different subunits, 5 of which are encoded in the nucleus.

The protein localises to the plastid. It localises to the chloroplast thylakoid membrane. The catalysed reaction is a plastoquinone + NADH + (n+1) H(+)(in) = a plastoquinol + NAD(+) + n H(+)(out). It carries out the reaction a plastoquinone + NADPH + (n+1) H(+)(in) = a plastoquinol + NADP(+) + n H(+)(out). In terms of biological role, NDH shuttles electrons from NAD(P)H:plastoquinone, via FMN and iron-sulfur (Fe-S) centers, to quinones in the photosynthetic chain and possibly in a chloroplast respiratory chain. The immediate electron acceptor for the enzyme in this species is believed to be plastoquinone. Couples the redox reaction to proton translocation, and thus conserves the redox energy in a proton gradient. The chain is NAD(P)H-quinone oxidoreductase subunit 5, chloroplastic (ndhF) from Calycanthus floridus var. glaucus (Eastern sweetshrub).